Consider the following 525-residue polypeptide: MNDFWQHCSALLERELTPQQYVTWIKPLAPVAFDASANTLSIAAPNRFKLDWVKSQFSGRISDLAREFWNTPIEVQFVLDPKAGMRSAAAGAAPAAPRAPLTPNGPAATVAAIAANLTANAAAAPSAPADVPMTPSAAAAHHLNADDADIDLPSLPAHEAAAGRRTWRPGPGAAPANGGEADSMYERSKLNPVLTFDNFVTGKANQLARAAAIQVADNPGISYNPLFLYGGVGLGKTHLIHAIGNQLLLDKAGARIRYIHAEQYVSDVVKAYQRKAFDDFKRYYHSLDLLLIDDIQFFSGKSRTQEEFFYAFEALVANKAQVIITSDTYPKEISGIDDRLISRFDSGLTVAIEPPELEMRVAILMRKAQSEGVNLSEDVAFFVAKHLRSNVRELEGALRKILAYSKFHGREISIELTKEALKDLLTVQNRQISVENIQKTVADFYNIKVADMYSKKRPANIARPRQIAMYLAKELTQKSLPEIGELFGGRDHTTVLHAVRKIADERSKDAQLNHELHVLEQTLKG.

The segment at Met1 to Thr71 is domain I, interacts with DnaA modulators. Residues Thr71–Ser188 form a domain II region. Residues Ala160 to Asp182 are disordered. The span at Pro169 to Ala181 shows a compositional bias: low complexity. Positions Lys189–Ser405 are domain III, AAA+ region. Positions 233, 235, 236, and 237 each coordinate ATP. Residues Lys406–Gly525 form a domain IV, binds dsDNA region.

The protein belongs to the DnaA family. As to quaternary structure, oligomerizes as a right-handed, spiral filament on DNA at oriC.

It is found in the cytoplasm. Plays an essential role in the initiation and regulation of chromosomal replication. ATP-DnaA binds to the origin of replication (oriC) to initiate formation of the DNA replication initiation complex once per cell cycle. Binds the DnaA box (a 9 base pair repeat at the origin) and separates the double-stranded (ds)DNA. Forms a right-handed helical filament on oriC DNA; dsDNA binds to the exterior of the filament while single-stranded (ss)DNA is stabiized in the filament's interior. The ATP-DnaA-oriC complex binds and stabilizes one strand of the AT-rich DNA unwinding element (DUE), permitting loading of DNA polymerase. After initiation quickly degrades to an ADP-DnaA complex that is not apt for DNA replication. Binds acidic phospholipids. This chain is Chromosomal replication initiator protein DnaA, found in Burkholderia orbicola (strain MC0-3).